A 484-amino-acid chain; its full sequence is Glutamate--tRNA ligase (484 aa).

The short motif at 11–21 (PSPTGYLHIGN) is the 'HIGH' region element. The 'KMSKS' region signature appears at 252 to 256 (KLSKR). Position 255 (Lys-255) interacts with ATP.

It belongs to the class-I aminoacyl-tRNA synthetase family. Glutamate--tRNA ligase type 1 subfamily. In terms of assembly, monomer.

It localises to the cytoplasm. It carries out the reaction tRNA(Glu) + L-glutamate + ATP = L-glutamyl-tRNA(Glu) + AMP + diphosphate. Catalyzes the attachment of glutamate to tRNA(Glu) in a two-step reaction: glutamate is first activated by ATP to form Glu-AMP and then transferred to the acceptor end of tRNA(Glu). The polypeptide is Glutamate--tRNA ligase (Staphylococcus haemolyticus (strain JCSC1435)).